The sequence spans 308 residues: Ribonuclease Z (308 aa).

Residues histidine 62, histidine 64, aspartate 66, histidine 67, histidine 140, aspartate 211, and histidine 269 each coordinate Zn(2+). Aspartate 66 serves as the catalytic Proton acceptor.

It belongs to the RNase Z family. Homodimer. The cofactor is Zn(2+).

The catalysed reaction is Endonucleolytic cleavage of RNA, removing extra 3' nucleotides from tRNA precursor, generating 3' termini of tRNAs. A 3'-hydroxy group is left at the tRNA terminus and a 5'-phosphoryl group is left at the trailer molecule.. Its function is as follows. Zinc phosphodiesterase, which displays some tRNA 3'-processing endonuclease activity. Probably involved in tRNA maturation, by removing a 3'-trailer from precursor tRNA. The polypeptide is Ribonuclease Z (Treponema denticola (strain ATCC 35405 / DSM 14222 / CIP 103919 / JCM 8153 / KCTC 15104)).